A 463-amino-acid polypeptide reads, in one-letter code: ATP synthase subunit beta (463 aa).

152-159 (GGAGVGKT) serves as a coordination point for ATP.

This sequence belongs to the ATPase alpha/beta chains family. As to quaternary structure, F-type ATPases have 2 components, CF(1) - the catalytic core - and CF(0) - the membrane proton channel. CF(1) has five subunits: alpha(3), beta(3), gamma(1), delta(1), epsilon(1). CF(0) has three main subunits: a(1), b(2) and c(9-12). The alpha and beta chains form an alternating ring which encloses part of the gamma chain. CF(1) is attached to CF(0) by a central stalk formed by the gamma and epsilon chains, while a peripheral stalk is formed by the delta and b chains.

The protein localises to the cell inner membrane. It catalyses the reaction ATP + H2O + 4 H(+)(in) = ADP + phosphate + 5 H(+)(out). Functionally, produces ATP from ADP in the presence of a proton gradient across the membrane. The catalytic sites are hosted primarily by the beta subunits. This Shewanella sp. (strain ANA-3) protein is ATP synthase subunit beta.